A 449-amino-acid chain; its full sequence is 23S rRNA (uracil(1939)-C(5))-methyltransferase RlmD (449 aa).

The region spanning 1–66 is the TRAM domain; the sequence is MGRSRYHNKL…AKFDEAKVVE (66 aa). [4Fe-4S] cluster is bound by residues cysteine 79, cysteine 85, cysteine 88, and cysteine 169. Glutamine 280, phenylalanine 309, asparagine 314, glutamate 330, asparagine 357, and aspartate 379 together coordinate S-adenosyl-L-methionine. Cysteine 405 (nucleophile) is an active-site residue.

Belongs to the class I-like SAM-binding methyltransferase superfamily. RNA M5U methyltransferase family. RlmD subfamily.

The enzyme catalyses uridine(1939) in 23S rRNA + S-adenosyl-L-methionine = 5-methyluridine(1939) in 23S rRNA + S-adenosyl-L-homocysteine + H(+). In terms of biological role, catalyzes the formation of 5-methyl-uridine at position 1939 (m5U1939) in 23S rRNA. The protein is 23S rRNA (uracil(1939)-C(5))-methyltransferase RlmD of Francisella tularensis subsp. holarctica (strain LVS).